The following is a 230-amino-acid chain: Orotidine 5'-phosphate decarboxylase (230 aa).

Substrate is bound by residues aspartate 10, lysine 31, 58 to 67 (DLKLHDIPNT), threonine 117, arginine 179, glutamine 188, glycine 208, and arginine 209. Lysine 60 serves as the catalytic Proton donor. Positions 177 to 196 (GIRPKDASSDDQKRITTPED) are disordered. Basic and acidic residues predominate over residues 179–196 (RPKDASSDDQKRITTPED).

This sequence belongs to the OMP decarboxylase family. Type 1 subfamily. Homodimer.

The catalysed reaction is orotidine 5'-phosphate + H(+) = UMP + CO2. It participates in pyrimidine metabolism; UMP biosynthesis via de novo pathway; UMP from orotate: step 2/2. Catalyzes the decarboxylation of orotidine 5'-monophosphate (OMP) to uridine 5'-monophosphate (UMP). This Staphylococcus saprophyticus subsp. saprophyticus (strain ATCC 15305 / DSM 20229 / NCIMB 8711 / NCTC 7292 / S-41) protein is Orotidine 5'-phosphate decarboxylase.